Consider the following 362-residue polypeptide: Notoamide biosynthesis cluster protein J' (362 aa).

An N-terminal signal peptide occupies residues 1–22 (MRNMATMLHLLTLILLTSPAST). Residues N157, N190, N280, and N338 are each glycosylated (N-linked (GlcNAc...) asparagine).

Functionally, part of the gene cluster that mediates the biosynthesis of notoamide, a fungal indole alkaloid that belongs to a family of natural products containing a characteristic bicyclo[2.2.2]diazaoctane core. The first step of notoamide biosynthesis involves coupling of L-proline and L-tryptophan by the bimodular NRPS notE', to produce cyclo-L-tryptophan-L-proline called brevianamide F. The reverse prenyltransferase notF' then acts as a deoxybrevianamide E synthase and converts brevianamide F to deoxybrevianamide E via reverse prenylation at C-2 of the indole ring leading to the bicyclo[2.2.2]diazaoctane core. Deoxybrevianamide E is further hydroxylated at C-6 of the indole ring, likely catalyzed by the cytochrome P450 monooxygenase notG', to yield 6-hydroxy-deoxybrevianamide E. 6-hydroxy-deoxybrevianamide E is a specific substrate of the prenyltransferase notC' for normal prenylation at C-7 to produce 6-hydroxy-7-prenyl-deoxybrevianamide, also called notoamide S. As the proposed pivotal branching point in notoamide biosynthesis, notoamide S can be diverted to notoamide E through an oxidative pyran ring closure putatively catalyzed by either notH' cytochrome P450 monooxygenase or the notD' FAD-linked oxidoreductase. This step would be followed by an indole 2,3-epoxidation-initiated pinacol-like rearrangement catalyzed by the notB' FAD-dependent monooxygenase leading to the formation of notoamide C and notoamide D. On the other hand notoamide S is converted to notoamide T by notH' (or notD'), a bifunctional oxidase that also functions as the intramolecular Diels-Alderase responsible for generation of (-)-notoamide T. To generate antipodal (+)-notoaminide T, notH (or notD) in Aspergillus strain MF297-2 is expected to catalyze a Diels-Alder reaction leading to the opposite stereochemistry. The remaining oxidoreductase notD' (or notH') likely catalyzes the oxidative pyran ring formation to yield (-)-stephacidin A. The FAD-dependent monooxygenase notI' is highly similar to notB' and is predicted to catalyze a similar conversion from (-)-stephacidin A to (+)-notoamide B via the 2,3-epoxidation of (-)-stephacidin A followed by a pinacol-type rearrangement. Finally, it remains unclear which enzyme could be responsible for the final hydroxylation steps leading to notoamide A and sclerotiamide. The function of notJ' in the notoamide biosynthesis has not been determined yet. The chain is Notoamide biosynthesis cluster protein J' from Aspergillus versicolor.